Reading from the N-terminus, the 76-residue chain is Immune protein Tsi5 (76 aa).

2 consecutive transmembrane segments (helical) span residues 19 to 39 (LLMT…EWFF) and 43 to 63 (WVTV…LYLY).

The protein localises to the membrane. Its function is as follows. Immunity protein that plays a role in preventing early activation of toxin Tse5. The protein is Immune protein Tsi5 of Pseudomonas aeruginosa (strain ATCC 15692 / DSM 22644 / CIP 104116 / JCM 14847 / LMG 12228 / 1C / PRS 101 / PAO1).